Reading from the N-terminus, the 268-residue chain is Putative carbamate hydrolase RutD (268 aa).

Positions 15 to 119 constitute an AB hydrolase-1 domain; the sequence is PVMVMIAGLG…VIVNGWLSLS (105 aa).

It belongs to the AB hydrolase superfamily. Hydrolase RutD family.

It catalyses the reaction carbamate + 2 H(+) = NH4(+) + CO2. Functionally, involved in pyrimidine catabolism. May facilitate the hydrolysis of carbamate, a reaction that can also occur spontaneously. The chain is Putative carbamate hydrolase RutD from Cronobacter sakazakii (strain ATCC BAA-894) (Enterobacter sakazakii).